Here is a 21-residue protein sequence, read N- to C-terminus: Putative pancreatic polypeptide 2 (21 aa).

This sequence belongs to the NPY family.

The chain is Putative pancreatic polypeptide 2 (PPY2P) from Homo sapiens (Human).